We begin with the raw amino-acid sequence, 524 residues long: GMP synthase [glutamine-hydrolyzing] (524 aa).

One can recognise a Glutamine amidotransferase type-1 domain in the interval 9–207 (RILILDFGSQ…VIHICQCIPN (199 aa)). Catalysis depends on C86, which acts as the Nucleophile. Catalysis depends on residues H181 and E183. The GMPS ATP-PPase domain maps to 208–399 (WTTKHIIEDS…LGLPADLIYR (192 aa)). 235-241 (SGGVDSA) serves as a coordination point for ATP.

In terms of assembly, homodimer.

It catalyses the reaction XMP + L-glutamine + ATP + H2O = GMP + L-glutamate + AMP + diphosphate + 2 H(+). Its pathway is purine metabolism; GMP biosynthesis; GMP from XMP (L-Gln route): step 1/1. Functionally, catalyzes the synthesis of GMP from XMP. In Coxiella burnetii (strain CbuG_Q212) (Coxiella burnetii (strain Q212)), this protein is GMP synthase [glutamine-hydrolyzing].